The following is a 352-amino-acid chain: DNA polymerase IV (352 aa).

The UmuC domain maps to 4–185 (IIHVDMDCFF…LPLSKIPGVG (182 aa)). Positions 8 and 103 each coordinate Mg(2+). E104 is an active-site residue.

Belongs to the DNA polymerase type-Y family. Monomer. Mg(2+) is required as a cofactor.

The protein localises to the cytoplasm. It catalyses the reaction DNA(n) + a 2'-deoxyribonucleoside 5'-triphosphate = DNA(n+1) + diphosphate. Poorly processive, error-prone DNA polymerase involved in untargeted mutagenesis. Copies undamaged DNA at stalled replication forks, which arise in vivo from mismatched or misaligned primer ends. These misaligned primers can be extended by PolIV. Exhibits no 3'-5' exonuclease (proofreading) activity. May be involved in translesional synthesis, in conjunction with the beta clamp from PolIII. In Enterobacter sp. (strain 638), this protein is DNA polymerase IV.